A 400-amino-acid chain; its full sequence is FPYQGSSTILESGNVNDYEVVYPRKVTALPKGAVQQKYEDAMQYEFKVNGEPVVLHLEKNKGLFSKDYSEIHYSPDGRRITTHPLVEDHCYYRGHIRNDADSTASISACNGLKGHFKLRGETYLIEPMKISNSEAHAVYKYENVEKEDEAHKMCGVTQNWESYEPIKKASQLIVSTEFQRYMEIVIVVDHSMYTKYKGDSDKIKAWVYEMINTISESYRYLYIDIIVSALEMWSEKDLINVETSAENTLKSFGEWRAKDLIHRISHDNAQLLTATDFDGPTIGLAYVASMCDPKRSVGVVQDHSSVNHLVAITLAHEIAHNLGVHHDKSSCSCGSGYTCIMSPVINSEVIKYFSDCSYIQCREYISKENPPCILNKPLRTDTVSTPVSGNELLEAGKDYD.

The first 6 residues, 1–6 (FPYQGS), serve as a signal peptide directing secretion. The propeptide occupies 7–176 (STILESGNVN…KKASQLIVST (170 aa)). The 198-residue stretch at 180–377 (RYMEIVIVVD…ENPPCILNKP (198 aa)) folds into the Peptidase M12B domain. Glu-183 and Asp-267 together coordinate Ca(2+). Disulfide bonds link Cys-291/Cys-372, Cys-331/Cys-356, and Cys-333/Cys-339. Position 316 (His-316) interacts with Zn(2+). Residue Glu-317 is part of the active site. Positions 320 and 326 each coordinate Zn(2+). Ca(2+) contacts are provided by Cys-372, Asn-375, Val-387, Asn-390, Leu-392, Glu-394, and Asp-400. Positions 378-400 (LRTDTVSTPVSGNELLEAGKDYD) are excised as a propeptide.

Belongs to the venom metalloproteinase (M12B) family. P-I subfamily. Monomer. The cofactor is Zn(2+). In terms of tissue distribution, expressed by the venom gland.

It is found in the secreted. Snake venom metalloproteinase that impairs hemostasis in the envenomed animal. The polypeptide is Snake venom metalloproteinase H2 (Deinagkistrodon acutus (Hundred-pace snake)).